A 563-amino-acid polypeptide reads, in one-letter code: F-box/kelch-repeat protein At5g42360 (563 aa).

In terms of domain architecture, F-box spans 129–175; the sequence is YRKHVYLPDDILEMCLMRLPLTSLLNAHLVCKKWQSMANTQRFLQMR. Kelch repeat units follow at residues 184 to 231, 232 to 282, and 355 to 402; these read WLFL…SIHE, EIYI…ATEV, and VLIA…IICN.

In Arabidopsis thaliana (Mouse-ear cress), this protein is F-box/kelch-repeat protein At5g42360.